The chain runs to 245 residues: Putative transport permease YvfS (245 aa).

6 consecutive transmembrane segments (helical) span residues Tyr20 to Val40, His53 to Ile73, Ile103 to Ile123, Gly137 to Met157, Ala164 to Phe184, and Gly214 to Leu234. The region spanning Tyr20 to Gln242 is the ABC transmembrane type-2 domain.

Belongs to the ABC-2 integral membrane protein family.

It localises to the cell membrane. The protein is Putative transport permease YvfS (yvfS) of Bacillus subtilis (strain 168).